The primary structure comprises 906 residues: Protein translocase subunit SecA (906 aa).

ATP contacts are provided by residues Q89, 107-111 (GEGKT), and D501. Zn(2+) is bound by residues C891, C893, C902, and H903.

Belongs to the SecA family. Monomer and homodimer. Part of the essential Sec protein translocation apparatus which comprises SecA, SecYEG and auxiliary proteins SecDF-YajC and YidC. Zn(2+) serves as cofactor.

It is found in the cell inner membrane. It localises to the cytoplasm. It catalyses the reaction ATP + H2O + cellular proteinSide 1 = ADP + phosphate + cellular proteinSide 2.. In terms of biological role, part of the Sec protein translocase complex. Interacts with the SecYEG preprotein conducting channel. Has a central role in coupling the hydrolysis of ATP to the transfer of proteins into and across the cell membrane, serving both as a receptor for the preprotein-SecB complex and as an ATP-driven molecular motor driving the stepwise translocation of polypeptide chains across the membrane. This is Protein translocase subunit SecA from Parvibaculum lavamentivorans (strain DS-1 / DSM 13023 / NCIMB 13966).